A 166-amino-acid chain; its full sequence is Peptidyl-prolyl cis-trans isomerase-like 1 (166 aa).

A PPIase cyclophilin-type domain is found at 10 to 164 (QPPNVYLETS…DDVKILKAYP (155 aa)). Residues 54-65 (HRIIKDFMIQGG), 70-71 (TG), 99-104 (AMANAG), 109-113 (GSQFF), Thr119, and Lys125 contribute to the cyclosporin A site. A Phosphoserine modification is found at Ser149.

It belongs to the cyclophilin-type PPIase family. PPIL1 subfamily. Identified in the spliceosome C complex. Interacts with SNW1/SKIP. Interacts with CDC40/PRP17; this interaction leads to CDC40 isomerization. Interacts with RBM22.

It is found in the nucleus. The catalysed reaction is [protein]-peptidylproline (omega=180) = [protein]-peptidylproline (omega=0). Inhibited by Cyclosporin A. Involved in pre-mRNA splicing as component of the spliceosome. PPIases accelerate the folding of proteins. It catalyzes the cis-trans isomerization of proline imidic peptide bonds in oligopeptides. Catalyzes prolyl peptide bond isomerization in CDC40/PRP17. Plays an important role in embryonic brain development; this function is independent of its isomerase activity. The chain is Peptidyl-prolyl cis-trans isomerase-like 1 (Ppil1) from Mus musculus (Mouse).